The primary structure comprises 864 residues: Leucine--tRNA ligase (864 aa).

The short motif at proline 47–histidine 57 is the 'HIGH' region element. Residues serine 298–threonine 317 form a disordered region. Basic and acidic residues predominate over residues glutamate 299–lysine 309. The 'KMSKS' region signature appears at lysine 622–serine 626. ATP is bound at residue lysine 625.

It belongs to the class-I aminoacyl-tRNA synthetase family.

It localises to the cytoplasm. The catalysed reaction is tRNA(Leu) + L-leucine + ATP = L-leucyl-tRNA(Leu) + AMP + diphosphate. The polypeptide is Leucine--tRNA ligase (Synechococcus sp. (strain RCC307)).